The chain runs to 865 residues: V-type proton ATPase 116 kDa subunit a 3 (865 aa).

Residues 1 to 409 lie on the Cytoplasmic side of the membrane; it reads MGSIYRSEHM…VNPAPWTIIS (409 aa). Residues 51-121 adopt a coiled-coil conformation; that stretch reads FVNEVRRCDE…NKNCKVLKNN (71 aa). Residues 410–430 traverse the membrane as a helical segment; it reads FPFLFAVMFGDAGHGIIMLIA. Over 431 to 453 the chain is Extracellular; that stretch reads ASAFVIFEKKLISMKIKDEIFNT. Residues 454-474 form a helical membrane-spanning segment; the sequence is FFGGRYVVLLMGMFAIYTGFI. Over 475-556 the chain is Cytoplasmic; it reads YNDFYSKSVN…FLNPMKMKTS (82 aa). A helical membrane pass occupies residues 557 to 577; the sequence is ILLGISQMAFGIMLSLMNHIG. Asparagine 578 carries an N-linked (GlcNAc...) asparagine glycan. Over 578–583 the chain is Extracellular; sequence NRSVVD. A helical transmembrane segment spans residues 584 to 604; it reads IVFVFIPQCLFLGCIFVYLCL. Topologically, residues 605–623 are cytoplasmic; sequence QVLMKWIFFYVKPAYIFGR. Residues 624-644 form a helical membrane-spanning segment; sequence LYPGSNCAPSLLIGLINMFMV. Residues 645-688 are Extracellular-facing; it reads KSRDASFAHDVGTAAGKEWVIVNGQNVTYTINDQCYLQQWYPNQ. Asparagine 670 and asparagine 687 each carry an N-linked (GlcNAc...) asparagine glycan. A helical membrane pass occupies residues 689–709; sequence SLVELILLLIAVVSVPVMLLV. Topologically, residues 710–798 are cytoplasmic; sequence KPFYIRWRHS…LTMGGWGGSA (89 aa). A helical membrane pass occupies residues 799–819; sequence AITILFYFIFSILSVCILILM. Residues 820–865 are Extracellular-facing; that stretch reads EGLSAFLHAIRLHWVEFQSKFYGGTGIQFEPFCFTKIIRVYEGLDQ.

The protein belongs to the V-ATPase 116 kDa subunit family. V-ATPase is a heteromultimeric enzyme made up of two complexes: the ATP-hydrolytic V1 complex and the proton translocation V0 complex. The V1 complex consists of three catalytic AB heterodimers that form a heterohexamer, three peripheral stalks each consisting of EG heterodimers, one central rotor including subunits D and F, and the regulatory subunits C and H. The proton translocation complex V0 consists of the proton transport subunit a, a ring of proteolipid subunits c9c'', rotary subunit d, subunits e and f, and the accessory subunits vah-19/Ac45 and vah-20/PRR. Interacts with V-type proton ATPase subunit C vha-11.

It localises to the apical cell membrane. Functionally, subunit of the V0 complex of vacuolar(H+)-ATPase (V-ATPase), a multisubunit enzyme composed of a peripheral complex (V1) that hydrolyzes ATP and a membrane integral complex (V0) that translocates protons. V-ATPase is responsible for acidifying and maintaining the pH of intracellular compartments and in some cell types, is targeted to the plasma membrane, where it is responsible for acidifying the extracellular environment. In the intestine, required for the rhythmic defecation behavior by promoting acidification in the gut lumen following defecation. Also, luminal acidification is required for nutrient uptake. This chain is V-type proton ATPase 116 kDa subunit a 3, found in Caenorhabditis elegans.